The following is a 1890-amino-acid chain: Putative aminopeptidase-2 (1890 aa).

Positions 1 to 20 (MRRKLLLLLCFIGLFSLIST) are cleaved as a signal peptide. A glycan (N-linked (GlcNAc...) asparagine) is linked at Asn110. Residues Glu220 and 354–358 (GAMEN) contribute to the substrate site. Residue His390 coordinates Zn(2+). Glu391 serves as the catalytic Proton acceptor. His394 and Glu413 together coordinate Zn(2+). Asn534, Asn581, Asn785, Asn803, Asn914, Asn1024, and Asn1094 each carry an N-linked (GlcNAc...) asparagine glycan. Position 1143 (Glu1143) interacts with substrate. An N-linked (GlcNAc...) asparagine glycan is attached at Asn1245. Position 1280–1284 (1280–1284 (GAMEN)) interacts with substrate. Zn(2+) is bound at residue His1316. The Proton acceptor role is filled by Glu1317. Residues His1320 and Glu1339 each contribute to the Zn(2+) site. N-linked (GlcNAc...) asparagine glycosylation is found at Asn1451, Asn1521, Asn1826, and Asn1841.

Belongs to the peptidase M1 family. It depends on Zn(2+) as a cofactor.

Putative aminopeptidase which plays a role in oocyte maturation. The protein is Putative aminopeptidase-2 of Caenorhabditis elegans.